Here is a 260-residue protein sequence, read N- to C-terminus: Snake venom serine protease KN6 (260 aa).

The first 18 residues, 1 to 18 (MVLIRVLANLLILQLSYA), serve as a signal peptide directing secretion. The propeptide occupies 19 to 24 (QKSSEL). The Peptidase S1 domain occupies 25-251 (VIGGDECNIN…HLDWIQSIIA (227 aa)). 5 disulfides stabilise this stretch: Cys-31–Cys-165, Cys-100–Cys-258, Cys-144–Cys-212, Cys-176–Cys-191, and Cys-202–Cys-227. Catalysis depends on His-67, which acts as the Charge relay system. N-linked (GlcNAc...) asparagine glycosylation occurs at Asn-105. Asp-112 functions as the Charge relay system in the catalytic mechanism. N-linked (GlcNAc...) asparagine glycosylation is present at Asn-172. Ser-206 serves as the catalytic Charge relay system. 2 N-linked (GlcNAc...) asparagine glycosylation sites follow: Asn-213 and Asn-255.

The protein belongs to the peptidase S1 family. Snake venom subfamily. As to quaternary structure, monomer. In terms of tissue distribution, expressed by the venom gland.

It localises to the secreted. In terms of biological role, snake venom serine protease that may act in the hemostasis system of the prey. In Trimeresurus stejnegeri (Chinese green tree viper), this protein is Snake venom serine protease KN6.